Consider the following 396-residue polypeptide: NADH-quinone oxidoreductase subunit D (396 aa).

The protein belongs to the complex I 49 kDa subunit family. As to quaternary structure, NDH-1 is composed of 14 different subunits. Subunits NuoB, C, D, E, F, and G constitute the peripheral sector of the complex.

The protein localises to the cell inner membrane. The enzyme catalyses a quinone + NADH + 5 H(+)(in) = a quinol + NAD(+) + 4 H(+)(out). In terms of biological role, NDH-1 shuttles electrons from NADH, via FMN and iron-sulfur (Fe-S) centers, to quinones in the respiratory chain. The immediate electron acceptor for the enzyme in this species is believed to be ubiquinone. Couples the redox reaction to proton translocation (for every two electrons transferred, four hydrogen ions are translocated across the cytoplasmic membrane), and thus conserves the redox energy in a proton gradient. The polypeptide is NADH-quinone oxidoreductase subunit D (Mesorhizobium japonicum (strain LMG 29417 / CECT 9101 / MAFF 303099) (Mesorhizobium loti (strain MAFF 303099))).